We begin with the raw amino-acid sequence, 370 residues long: MQFELLAQHGAARRGRLTLAHGTVDTPAFMPVGTYGTVKAMTPAALADTGAQICLGNTFHLWLRPGLDVVAAHGGLHRFMNWDRPILTDSGGFQVFSLGALRKISEEGVKFASPIDGAKLFLTPEESMRIQTVLNSDIAMIFDECTPHPATHDEAAKSMQLSLRWARRSRDEFDRLANPNALFGIVQGGMFEDLRDESLAALDAIGFSGYAIGGLSVGEPKEDMARILAHTAPRLPAGRPRYLMGVGTPEDIVAGVAAGIDMFDCVMPTRNARNGWLFTRYGDIKIKNATHKQDTRPLDPSCDCYTCRNFSRAYLHHLHRAGEILGSMLNTIHNLRYYQTLTAELRAAIAAGDLDSHAARFRADRSTGAC.

Asp89 (proton acceptor) is an active-site residue. Residues Asp89–Phe93, Asp143, Gln187, and Gly214 contribute to the substrate site. The segment at Gly245–Asp251 is RNA binding. Asp264 serves as the catalytic Nucleophile. The segment at Thr269 to Arg273 is RNA binding; important for wobble base 34 recognition. Zn(2+) is bound by residues Cys302, Cys304, Cys307, and His333.

It belongs to the queuine tRNA-ribosyltransferase family. In terms of assembly, homodimer. Within each dimer, one monomer is responsible for RNA recognition and catalysis, while the other monomer binds to the replacement base PreQ1. Zn(2+) is required as a cofactor.

It catalyses the reaction 7-aminomethyl-7-carbaguanine + guanosine(34) in tRNA = 7-aminomethyl-7-carbaguanosine(34) in tRNA + guanine. It functions in the pathway tRNA modification; tRNA-queuosine biosynthesis. Functionally, catalyzes the base-exchange of a guanine (G) residue with the queuine precursor 7-aminomethyl-7-deazaguanine (PreQ1) at position 34 (anticodon wobble position) in tRNAs with GU(N) anticodons (tRNA-Asp, -Asn, -His and -Tyr). Catalysis occurs through a double-displacement mechanism. The nucleophile active site attacks the C1' of nucleotide 34 to detach the guanine base from the RNA, forming a covalent enzyme-RNA intermediate. The proton acceptor active site deprotonates the incoming PreQ1, allowing a nucleophilic attack on the C1' of the ribose to form the product. After dissociation, two additional enzymatic reactions on the tRNA convert PreQ1 to queuine (Q), resulting in the hypermodified nucleoside queuosine (7-(((4,5-cis-dihydroxy-2-cyclopenten-1-yl)amino)methyl)-7-deazaguanosine). The sequence is that of Queuine tRNA-ribosyltransferase from Aromatoleum aromaticum (strain DSM 19018 / LMG 30748 / EbN1) (Azoarcus sp. (strain EbN1)).